Consider the following 169-residue polypeptide: Peptide deformylase (169 aa).

Positions 94 and 136 each coordinate Fe cation. The active site involves Glu-137. Residue His-140 coordinates Fe cation.

The protein belongs to the polypeptide deformylase family. Fe(2+) is required as a cofactor.

The catalysed reaction is N-terminal N-formyl-L-methionyl-[peptide] + H2O = N-terminal L-methionyl-[peptide] + formate. Its function is as follows. Removes the formyl group from the N-terminal Met of newly synthesized proteins. Requires at least a dipeptide for an efficient rate of reaction. N-terminal L-methionine is a prerequisite for activity but the enzyme has broad specificity at other positions. The sequence is that of Peptide deformylase from Phenylobacterium zucineum (strain HLK1).